Here is a 356-residue protein sequence, read N- to C-terminus: Dihydroorotate dehydrogenase (quinone) (356 aa).

FMN is bound by residues 67-71 (PGFDK) and threonine 91. Lysine 71 contacts substrate. Residue 116–120 (NRMGF) participates in substrate binding. FMN-binding residues include asparagine 147 and asparagine 178. A substrate-binding site is contributed by asparagine 178. Serine 181 functions as the Nucleophile in the catalytic mechanism. Asparagine 183 contacts substrate. Residues lysine 218 and serine 246 each coordinate FMN. A substrate-binding site is contributed by 247–248 (NT). FMN-binding positions include glycine 268, glycine 297, and 318-319 (YS).

It belongs to the dihydroorotate dehydrogenase family. Type 2 subfamily. As to quaternary structure, monomer. The cofactor is FMN.

The protein resides in the cell membrane. It catalyses the reaction (S)-dihydroorotate + a quinone = orotate + a quinol. The protein operates within pyrimidine metabolism; UMP biosynthesis via de novo pathway; orotate from (S)-dihydroorotate (quinone route): step 1/1. Catalyzes the conversion of dihydroorotate to orotate with quinone as electron acceptor. The sequence is that of Dihydroorotate dehydrogenase (quinone) from Sphingopyxis alaskensis (strain DSM 13593 / LMG 18877 / RB2256) (Sphingomonas alaskensis).